Here is a 641-residue protein sequence, read N- to C-terminus: Methylenetetrahydrofolate reductase 2 (641 aa).

Glutamate 20 acts as the Proton donor/acceptor in catalysis. NAD(+) contacts are provided by residues 20–25 and 52–53; these read EYFPPK and TW. Residues 52-53, histidine 81, 111-113, tyrosine 153, aspartate 172, and lysine 179 contribute to the FAD site; these read TW and RGD. Substrate is bound at residue aspartate 113. Residue glutamine 190 coordinates substrate.

This sequence belongs to the methylenetetrahydrofolate reductase family. FAD is required as a cofactor.

It catalyses the reaction (6S)-5-methyl-5,6,7,8-tetrahydrofolate + NADP(+) = (6R)-5,10-methylene-5,6,7,8-tetrahydrofolate + NADPH + H(+). The protein operates within one-carbon metabolism; tetrahydrofolate interconversion. Major methylenetetrahydrofolate reductase required to generate the methyl groups necessary for methionine synthetase to convert homocysteine to methionine. Performs 15 to 20 percent of the total methylenetetrahydrofolate reductase activity of the cells. The protein is Methylenetetrahydrofolate reductase 2 (met11) of Schizosaccharomyces pombe (strain 972 / ATCC 24843) (Fission yeast).